Consider the following 166-residue polypeptide: MTDANGAPAEAAPQIRMQVLAQYVRDMSFENMVAQKGLQGGDVQPDIQVQVSLDARKRSVEHQYEVITKFKVTSKNKSGSAETLFLLELDYGGIFHVENVPEDQLHPFLLIECPRLLFPFVRRIISDVTRDGGFPPLNVDTVDFLALYRMELARRAEAQKAAQPVQ.

This sequence belongs to the SecB family. In terms of assembly, homotetramer, a dimer of dimers. One homotetramer interacts with 1 SecA dimer.

It is found in the cytoplasm. One of the proteins required for the normal export of preproteins out of the cell cytoplasm. It is a molecular chaperone that binds to a subset of precursor proteins, maintaining them in a translocation-competent state. It also specifically binds to its receptor SecA. The protein is Protein-export protein SecB of Cereibacter sphaeroides (strain ATCC 17029 / ATH 2.4.9) (Rhodobacter sphaeroides).